The sequence spans 236 residues: Proteasome subunit alpha (236 aa).

This sequence belongs to the peptidase T1A family. The 20S proteasome core is composed of 14 alpha and 14 beta subunits that assemble into four stacked heptameric rings, resulting in a barrel-shaped structure. The two inner rings, each composed of seven catalytic beta subunits, are sandwiched by two outer rings, each composed of seven alpha subunits. The catalytic chamber with the active sites is on the inside of the barrel. Has a gated structure, the ends of the cylinder being occluded by the N-termini of the alpha-subunits. Is capped by the proteasome-associated ATPase, ARC.

Its subcellular location is the cytoplasm. The protein operates within protein degradation; proteasomal Pup-dependent pathway. The formation of the proteasomal ATPase ARC-20S proteasome complex, likely via the docking of the C-termini of ARC into the intersubunit pockets in the alpha-rings, may trigger opening of the gate for substrate entry. Interconversion between the open-gate and close-gate conformations leads to a dynamic regulation of the 20S proteasome proteolysis activity. Component of the proteasome core, a large protease complex with broad specificity involved in protein degradation. The polypeptide is Proteasome subunit alpha (Jonesia denitrificans (strain ATCC 14870 / DSM 20603 / BCRC 15368 / CIP 55.134 / JCM 11481 / NBRC 15587 / NCTC 10816 / Prevot 55134) (Listeria denitrificans)).